The chain runs to 370 residues: MSFAPLQNDTFLRACRRQATDYTPLWLMRQAGRYLPEYKATRAKAGSFMGLATNVEYATEVTLQPLERFPLDAAILFSDILTVPDAMGLGLSFAEGEGPRFAKAVRDEADVAALAVPDLDKLRYVFDAVTSIRRALNGRVPLIGFSGSPWTLACYMVEGKGSDDYRLVKTLMYSRPDLMHRILAVNADAVAAYLNAQIDAGAQAVMVFDSWGGVLADGCFQDFSLEYTRRVLAQLKRTGVDGQDVPRIVFTKGGGIWLDDMKDIDCEVLGLDWTAHLGKARAIVGGQVGGPGKALQGNIDPNVLFAPSAQIVTQVRAVLDSFGTPHTDKTTTGPTHIFNLGHGISQFTPPEHVAALVEAVHGYSRSLRQR.

Residues 29 to 33 (RQAGR), D79, Y155, S210, and H342 each bind substrate.

The protein belongs to the uroporphyrinogen decarboxylase family. Homodimer.

It localises to the cytoplasm. It catalyses the reaction uroporphyrinogen III + 4 H(+) = coproporphyrinogen III + 4 CO2. The protein operates within porphyrin-containing compound metabolism; protoporphyrin-IX biosynthesis; coproporphyrinogen-III from 5-aminolevulinate: step 4/4. In terms of biological role, catalyzes the decarboxylation of four acetate groups of uroporphyrinogen-III to yield coproporphyrinogen-III. This Acidovorax ebreus (strain TPSY) (Diaphorobacter sp. (strain TPSY)) protein is Uroporphyrinogen decarboxylase.